A 247-amino-acid polypeptide reads, in one-letter code: Small ribosomal subunit protein uS3 (247 aa).

The KH type-2 domain maps to 18-87 (IDEYLAKRFY…NPQITVRRVE (70 aa)). The segment at 226 to 247 (QQGEVVGEAPNTPLEEQGQKQG) is disordered.

The protein belongs to the universal ribosomal protein uS3 family. Part of the 30S ribosomal subunit.

In terms of biological role, binds the lower part of the 30S subunit head. The sequence is that of Small ribosomal subunit protein uS3 from Hyperthermus butylicus (strain DSM 5456 / JCM 9403 / PLM1-5).